Consider the following 327-residue polypeptide: Microtubule-associated protein RP/EB family member 2 (327 aa).

The segment covering 1–17 has biased composition (polar residues); it reads MPGPTQTLSPNGENNND. The disordered stretch occupies residues 1 to 20; that stretch reads MPGPTQTLSPNGENNNDVIH. A Calponin-homology (CH) domain is found at 56-158; that stretch reads TMSRHDIIAW…FIQWFKKFFD (103 aa). 2 disordered regions span residues 170-238 and 295-327; these read EARQ…DKDL and LYSS…QEEY. The region spanning 234-304 is the EB1 C-terminal domain; sequence SDKDLETQVS…LYSSEEQESH (71 aa).

This sequence belongs to the MAPRE family.

The protein resides in the cytoplasm. The protein localises to the cytoskeleton. In terms of biological role, may be involved in microtubule polymerization, and spindle function by stabilizing microtubules and anchoring them at centrosomes. The chain is Microtubule-associated protein RP/EB family member 2 (mapre2) from Xenopus laevis (African clawed frog).